We begin with the raw amino-acid sequence, 88 residues long: Small ribosomal subunit protein uS15 (88 aa).

This sequence belongs to the universal ribosomal protein uS15 family. In terms of assembly, part of the 30S ribosomal subunit. Forms a bridge to the 50S subunit in the 70S ribosome, contacting the 23S rRNA.

In terms of biological role, one of the primary rRNA binding proteins, it binds directly to 16S rRNA where it helps nucleate assembly of the platform of the 30S subunit by binding and bridging several RNA helices of the 16S rRNA. Its function is as follows. Forms an intersubunit bridge (bridge B4) with the 23S rRNA of the 50S subunit in the ribosome. In Flavobacterium johnsoniae (strain ATCC 17061 / DSM 2064 / JCM 8514 / BCRC 14874 / CCUG 350202 / NBRC 14942 / NCIMB 11054 / UW101) (Cytophaga johnsonae), this protein is Small ribosomal subunit protein uS15.